Reading from the N-terminus, the 487-residue chain is Adenosylhomocysteinase (487 aa).

Residues Thr-76, Asp-151, and Glu-212 each coordinate substrate. Thr-213–Thr-215 is an NAD(+) binding site. Residues Lys-242 and Asp-246 each contribute to the substrate site. NAD(+) is bound by residues Asn-247, Gly-276–Gly-281, Glu-299, Asn-334, Ile-355–His-357, and Asn-403.

The protein belongs to the adenosylhomocysteinase family. Requires NAD(+) as cofactor.

The protein resides in the cytoplasm. The catalysed reaction is S-adenosyl-L-homocysteine + H2O = L-homocysteine + adenosine. It functions in the pathway amino-acid biosynthesis; L-homocysteine biosynthesis; L-homocysteine from S-adenosyl-L-homocysteine: step 1/1. May play a key role in the regulation of the intracellular concentration of adenosylhomocysteine. The protein is Adenosylhomocysteinase of Bacteroides fragilis (strain YCH46).